The chain runs to 112 residues: Protein ORF3 (112 aa).

Hydrophobic regions lie at residues 7 to 23 and 40 to 60; these read ALGL…LCCP and AAVV…PIFI. Positions 28–66 are interaction with host HPX; it reads VSRLAVAAGKRGAAVVSGVTGLILSPSPSPIFIQPTPSH. The interval 70-112 is homodimerization, and interaction with host AMBP/bikunin; it reads QPPPGLELALGSQSVHSAPLGVTSPSAPPLPPVVDLPQLGLRR. A disordered region spans residues 89–112; it reads LGVTSPSAPPLPPVVDLPQLGLRR. Positions 93–102 are interaction with host SRC, HCK, FYN, PIK3R3 and GRB2; that stretch reads SPSAPPLPPV. Residues 94-97 carry the PTAP/PSAP motif motif; the sequence is PSAP.

The protein belongs to the hepevirus ORF3 protein family. Forms homooligomers. Interacts with host SRC, HCK, FYN, PIK3R3 and GRB2 (via SH3 domain); binding does not activate the kinases. Interacts with host AMBP/bikunin and AMBP/alpha-1-microglobulin peptides. Interacts with host HPX/hemopexin. Interacts (when phosphorylated) with capsid protein ORF2. Interacts with host TSG101; this interaction plays a role in viral release from the host cell. Interacts with host SIRPA; this interaction down-regulates the phosphorylation of host IRF3. In terms of processing, palmitoylated in the N-terminus.

The protein localises to the host endoplasmic reticulum membrane. It localises to the host cytoplasm. The protein resides in the host cytoskeleton. It is found in the virion. Its subcellular location is the host cell membrane. In terms of biological role, small multifunctional phosphoprotein involved in virion morphogenesis, egress and counteracting host innate immunity. Plays critical roles in the final steps of viral release by interacting with host TSG101, a member of the vacuolar protein-sorting pathway and using other cellular host proteins involved in vesicle formation pathway. Also acts as a viroporin and forms ion conductive pores allowing viral particle release. Impairs the generation of type I interferon by down-regulating host TLR3 and TLR7 as well as their downstream signaling pathways. Down-regulates the phosphorylation of host IRF3 via the interaction with host SIRP-alpha, thereby inhibiting IFN-I expression. Interacts with host microtubules. The polypeptide is Protein ORF3 (Bandicota bengalensis (lesser bandicoot rat)).